A 92-amino-acid polypeptide reads, in one-letter code: uncharacterized protein (92 aa).

This is an uncharacterized protein from Mycobacterium tuberculosis (strain CDC 1551 / Oshkosh).